The primary structure comprises 210 residues: Probable GTP-binding protein EngB (210 aa).

The 175-residue stretch at 25–199 (TGIEVAFAGR…RQKLDTWFSE (175 aa)) folds into the EngB-type G domain. Residues 33 to 40 (GRSNAGKS), 60 to 64 (GRTQL), 78 to 81 (DLPG), 145 to 148 (TKTD), and 178 to 180 (FSS) each bind GTP. 2 residues coordinate Mg(2+): S40 and T62.

This sequence belongs to the TRAFAC class TrmE-Era-EngA-EngB-Septin-like GTPase superfamily. EngB GTPase family. Requires Mg(2+) as cofactor.

Necessary for normal cell division and for the maintenance of normal septation. The sequence is that of Probable GTP-binding protein EngB from Escherichia coli O6:K15:H31 (strain 536 / UPEC).